A 268-amino-acid chain; its full sequence is Indole-3-glycerol phosphate synthase 2 (268 aa).

It belongs to the TrpC family.

It carries out the reaction 1-(2-carboxyphenylamino)-1-deoxy-D-ribulose 5-phosphate + H(+) = (1S,2R)-1-C-(indol-3-yl)glycerol 3-phosphate + CO2 + H2O. It functions in the pathway amino-acid biosynthesis; L-tryptophan biosynthesis; L-tryptophan from chorismate: step 4/5. In Ralstonia nicotianae (strain ATCC BAA-1114 / GMI1000) (Ralstonia solanacearum), this protein is Indole-3-glycerol phosphate synthase 2 (trpC2).